Consider the following 196-residue polypeptide: Somatotropin (196 aa).

The signal sequence occupies residues 1–16; sequence MDKVILVLLMSLGASS. The residue at position 17 (glutamine 17) is a Pyrrolidone carboxylic acid. Zn(2+) is bound at residue histidine 35. The cysteines at positions 67 and 169 are disulfide-linked. Glutamate 178 contacts Zn(2+). A disulfide bridge links cysteine 186 with cysteine 194.

This sequence belongs to the somatotropin/prolactin family.

The protein resides in the secreted. In terms of biological role, growth hormone plays an important role in growth control and is involved in the regulation of several anabolic processes. Implicated as an osmoregulatory substance important for seawater adaptation. This is Somatotropin (gh) from Takifugu rubripes (Japanese pufferfish).